The primary structure comprises 129 residues: Small ribosomal subunit protein uS9 (129 aa).

The protein belongs to the universal ribosomal protein uS9 family.

The protein is Small ribosomal subunit protein uS9 of Aliarcobacter butzleri (strain RM4018) (Arcobacter butzleri).